Here is a 360-residue protein sequence, read N- to C-terminus: Galactoside alpha-(1,2)-fucosyltransferase 1 (360 aa).

Topologically, residues 1 to 8 (MWAPGHHH) are cytoplasmic. Residues 9–27 (LCLIFLLTCVFACVFFLLI) form a helical; Signal-anchor for type II membrane protein membrane-spanning segment. Over 28–360 (HQNLFHSGLD…GINADLSPLQ (333 aa)) the chain is Lumenal. Residues N65, N301, and N327 are each glycosylated (N-linked (GlcNAc...) asparagine).

Belongs to the glycosyltransferase 11 family. Expressed in brain, intestine and kidney.

It localises to the golgi apparatus. The protein localises to the golgi stack membrane. The enzyme catalyses a ganglioside GM1 + GDP-beta-L-fucose = a ganglioside Fuc-GM1 + GDP + H(+). It catalyses the reaction a beta-D-galactosyl-(1-&gt;4)-N-acetyl-beta-D-glucosaminyl derivative + GDP-beta-L-fucose = an alpha-L-Fuc-(1-&gt;2)-beta-D-Gal-(1-&gt;4)-beta-D-GlcNAc derivative + GDP + H(+). It carries out the reaction a ganglioside GA1 + GDP-beta-L-fucose = a ganglioside Fuc-GA1 + GDP + H(+). The catalysed reaction is a beta-D-Gal-(1-&gt;3)-beta-D-GlcNAc-(1-&gt;3)-beta-D-Gal-(1-&gt;4)-beta-D-Glc-(1&lt;-&gt;1')-Cer(d18:1(4E)) + GDP-beta-L-fucose = alpha-L-fucosyl-(1-&gt;2)- beta-D-galactosyl-(1-&gt;3)-N-acetyl-beta-D-glucosaminyl-(1-&gt;3)-beta-D-galactosyl-(1-&gt;4)-beta-D-glucosyl-(1&lt;-&gt;1')-N-acylsphing-4-enine + GDP + H(+). The enzyme catalyses a neolactoside nLc4Cer(d18:1(4E)) + GDP-beta-L-fucose = a neolactoside IV(2)-alpha-Fuc-nLc4Cer(d18:1(4E)) + GDP + H(+). It catalyses the reaction beta-D-galactosyl-(1-&gt;3)-N-acetyl-D-galactosamine + GDP-beta-L-fucose = alpha-L-fucosyl-(1-&gt;2)-beta-D-galactosyl-(1-&gt;3)-N-acetyl-D-galactosamine + GDP + H(+). It participates in protein modification; protein glycosylation. Catalyzes the transfer of L-fucose, from a guanosine diphosphate-beta-L-fucose, to the terminal galactose residue of glycoconjugates through an alpha(1,2) linkage leading to H antigen synthesis that is an intermediate substrate in the synthesis of ABO blood group antigens. H antigen is essential for maturation of the glomerular layer of the main olfactory bulb, in cell migration and early cell-cell contacts during tumor associated angiogenesis. Preferentially fucosylates soluble lactose and to a lesser extent, fucosylates glycolipids gangliosides GA1 and GM1a. In Bos taurus (Bovine), this protein is Galactoside alpha-(1,2)-fucosyltransferase 1.